Here is a 225-residue protein sequence, read N- to C-terminus: NAD(P)H-quinone oxidoreductase subunit K, chloroplastic (225 aa).

Residues C43, C44, C108, and C139 each coordinate [4Fe-4S] cluster.

Belongs to the complex I 20 kDa subunit family. In terms of assembly, NDH is composed of at least 16 different subunits, 5 of which are encoded in the nucleus. The cofactor is [4Fe-4S] cluster.

The protein localises to the plastid. It localises to the chloroplast thylakoid membrane. The enzyme catalyses a plastoquinone + NADH + (n+1) H(+)(in) = a plastoquinol + NAD(+) + n H(+)(out). It catalyses the reaction a plastoquinone + NADPH + (n+1) H(+)(in) = a plastoquinol + NADP(+) + n H(+)(out). In terms of biological role, NDH shuttles electrons from NAD(P)H:plastoquinone, via FMN and iron-sulfur (Fe-S) centers, to quinones in the photosynthetic chain and possibly in a chloroplast respiratory chain. The immediate electron acceptor for the enzyme in this species is believed to be plastoquinone. Couples the redox reaction to proton translocation, and thus conserves the redox energy in a proton gradient. The chain is NAD(P)H-quinone oxidoreductase subunit K, chloroplastic from Nasturtium officinale (Watercress).